Here is a 326-residue protein sequence, read N- to C-terminus: Guanine nucleotide-binding protein subunit beta-like protein 1 (326 aa).

6 WD repeats span residues 17 to 61 (GTQS…IVTT), 64 to 104 (GHGG…NTIM), 159 to 202 (ARPG…VCSQ), 205 to 244 (CHEEPVMGLDFDSQKAKGISGSAGKVLAVWSLDDQQSLQV), 250 to 291 (LTNP…AVLA), and 292 to 325 (FHSAPVYCVAFAADGLLAAGSKDQRISIWSLYPC).

As to expression, expressed at low levels in most tissues and highly expressed in adult testis. Widely expressed in adult brain with striking regional distribution in forebrain, midbrain, and hindbrain structures, including the thalamus, hypothalamus, amygdala, hippocampus, pons.

Its subcellular location is the cytoplasm. It localises to the nucleus. In terms of biological role, acts as a critical regulator of DNA damage response (DDR) signaling via specifically regulating phosphatidylinositol 3-kinase-related protein kinase (PIKK) family proteins. The chain is Guanine nucleotide-binding protein subunit beta-like protein 1 (Gnb1l) from Mus musculus (Mouse).